The primary structure comprises 297 residues: CASP-like protein 4A2 (297 aa).

The disordered stretch occupies residues 1–136 (MKMKRTVSSN…MNGEESATTA (136 aa)). Over 1–149 (MKMKRTVSSN…ARRDDLVSVT (149 aa)) the chain is Cytoplasmic. A compositionally biased stretch (low complexity) spans 8 to 19 (SSNSEAYSYNES). Pro residues predominate over residues 69–83 (LPSPIPPPPPQIPPP). Positions 93-121 (MNSSLDKSPSSMVVQNSWVREDGQQNTTR) are enriched in polar residues. A helical transmembrane segment spans residues 150–170 (ALGFRITEVILCVISFSIMAA). Over 171–189 (DKTQGWSGDSYDRYKEYRY) the chain is Extracellular. The chain crosses the membrane as a helical span at residues 190–210 (CLAVNVIAFVYSAFEACDAAC). Over 211–225 (YMAKESYMMNCGFHD) the chain is Cytoplasmic. A helical transmembrane segment spans residues 226–246 (LFVFSMDQLLAYLLMSASSCA). Residues 247-265 (ATRVDDWVSNWGKDEFTQM) lie on the Extracellular side of the membrane. Residues 266–286 (ATASIAVSFLAFGAFAVSALI) form a helical membrane-spanning segment. The Cytoplasmic portion of the chain corresponds to 287–297 (SSYRLFTHASS).

This sequence belongs to the Casparian strip membrane proteins (CASP) family. As to quaternary structure, homodimer and heterodimers.

It is found in the cell membrane. This chain is CASP-like protein 4A2, found in Arabidopsis lyrata subsp. lyrata (Lyre-leaved rock-cress).